A 5162-amino-acid polypeptide reads, in one-letter code: Linear gramicidin synthase subunit B (5162 aa).

Carrier domains are found at residues 963–1038 (APRN…QALR), 2027–2101 (EPQS…VVLE), 3541–3616 (APRN…GAIG), and 4601–4675 (AATS…GQST). 4 positions are modified to O-(pantetheine 4'-phosphoryl)serine: Ser-998, Ser-2062, Ser-3576, and Ser-4636.

This sequence belongs to the ATP-dependent AMP-binding enzyme family. Large multienzyme complex composed of 4 subunits; LgrA, LgrB, LgrC and LgrD. Requires pantetheine 4'-phosphate as cofactor.

In terms of biological role, activates the 3rd to 6th amino acids (Ala, D-Leu, Ala and D-Val) in linear gramicidin and catalyzes the formation of the peptide bond between them. This enzyme is also responsible for the epimerization of the 4th (D-Leu) and the 6th (D-Val) amino acids. This is Linear gramicidin synthase subunit B (lgrB) from Brevibacillus parabrevis.